Reading from the N-terminus, the 299-residue chain is GTPase Era (299 aa).

One can recognise an Era-type G domain in the interval 4–171; that stretch reads KSGFVAILGR…MEILKENLDE (168 aa). The tract at residues 12 to 19 is G1; the sequence is GRPNVGKS. 12-19 is a GTP binding site; the sequence is GRPNVGKS. Positions 38-42 are G2; sequence QTTRN. Positions 59–62 are G3; it reads DTPG. GTP contacts are provided by residues 59-63 and 121-124; these read DTPGI and NKID. The segment at 121-124 is G4; the sequence is NKID. The G5 stretch occupies residues 150 to 152; it reads ISA. Residues 202–280 form the KH type-2 domain; that stretch reads TREEIPHSVA…FLETWVKVKK (79 aa).

Belongs to the TRAFAC class TrmE-Era-EngA-EngB-Septin-like GTPase superfamily. Era GTPase family. Monomer.

The protein localises to the cytoplasm. The protein resides in the cell membrane. An essential GTPase that binds both GDP and GTP, with rapid nucleotide exchange. Plays a role in 16S rRNA processing and 30S ribosomal subunit biogenesis and possibly also in cell cycle regulation and energy metabolism. The polypeptide is GTPase Era (Streptococcus suis (strain 98HAH33)).